We begin with the raw amino-acid sequence, 58 residues long: MAVPKKRTPKSKTRSRKSQWMRKALKQLQKARTLAGRLAARQDQMQPTQMQPTQMQPN.

Disordered regions lie at residues 1-21 (MAVP…SQWM) and 34-58 (LAGR…MQPN). The segment covering 44 to 58 (QMQPTQMQPTQMQPN) has biased composition (low complexity).

This sequence belongs to the bacterial ribosomal protein bL32 family.

The protein resides in the plastid. The protein localises to the chloroplast. This chain is Large ribosomal subunit protein bL32c, found in Cyanidioschyzon merolae (strain NIES-3377 / 10D) (Unicellular red alga).